A 99-amino-acid chain; its full sequence is Large ribosomal subunit protein bL27 (99 aa).

The disordered stretch occupies residues 13–65; sequence AHHKGGGSTTNGRNSAGRRLGAKRADGQEVHAGSIIYRQRGTKIHPGKNVGRG.

Belongs to the bacterial ribosomal protein bL27 family.

This chain is Large ribosomal subunit protein bL27, found in Lactobacillus delbrueckii subsp. bulgaricus (strain ATCC BAA-365 / Lb-18).